The chain runs to 643 residues: UvrABC system protein C (643 aa).

One can recognise a GIY-YIG domain in the interval 25–104 (AEPGVYFMRD…IKQHQPHFNV (80 aa)). Positions 214–249 (SELVELLEAQMLQAAENLEFEKAAKIRDQIRGLEGL) constitute a UVR domain.

It belongs to the UvrC family. As to quaternary structure, interacts with UvrB in an incision complex.

Its subcellular location is the cytoplasm. Functionally, the UvrABC repair system catalyzes the recognition and processing of DNA lesions. UvrC both incises the 5' and 3' sides of the lesion. The N-terminal half is responsible for the 3' incision and the C-terminal half is responsible for the 5' incision. The polypeptide is UvrABC system protein C (Synechococcus elongatus (strain ATCC 33912 / PCC 7942 / FACHB-805) (Anacystis nidulans R2)).